Here is a 187-residue protein sequence, read N- to C-terminus: ATP-dependent protease subunit HslV (187 aa).

Residue Thr-7 is part of the active site. Ala-162, Cys-165, and Thr-168 together coordinate Na(+).

Belongs to the peptidase T1B family. HslV subfamily. As to quaternary structure, a double ring-shaped homohexamer of HslV is capped on each side by a ring-shaped HslU homohexamer. The assembly of the HslU/HslV complex is dependent on binding of ATP.

The protein localises to the cytoplasm. It catalyses the reaction ATP-dependent cleavage of peptide bonds with broad specificity.. Allosterically activated by HslU binding. In terms of biological role, protease subunit of a proteasome-like degradation complex believed to be a general protein degrading machinery. This chain is ATP-dependent protease subunit HslV, found in Methylococcus capsulatus (strain ATCC 33009 / NCIMB 11132 / Bath).